Reading from the N-terminus, the 136-residue chain is ATP synthase epsilon chain, plastid (136 aa).

It belongs to the ATPase epsilon chain family. F-type ATPases have 2 components, CF(1) - the catalytic core - and CF(0) - the membrane proton channel. CF(1) has five subunits: alpha(3), beta(3), gamma(1), delta(1), epsilon(1). CF(0) has three main subunits: a, b and c.

Its subcellular location is the plastid thylakoid membrane. Its function is as follows. Produces ATP from ADP in the presence of a proton gradient across the membrane. This Cuscuta reflexa (Southern Asian dodder) protein is ATP synthase epsilon chain, plastid.